We begin with the raw amino-acid sequence, 259 residues long: L-cystine import ATP-binding protein TcyN (259 aa).

In terms of domain architecture, ABC transporter spans 2 to 239 (IEIKNIHKQF…TKKDRTRQFL (238 aa)). 34–41 (GPSGSGKT) serves as a coordination point for ATP.

The protein belongs to the ABC transporter superfamily. L-cystine importer (TC 3.A.1.3.13) family. The complex is composed of two ATP-binding proteins (TcyN), two transmembrane proteins (TcyL and TcyM) and two solute-binding proteins (TcyJ and TcyK).

It is found in the cell membrane. Its function is as follows. Part of the ABC transporter complex TcyJKLMN involved in L-cystine import. Responsible for energy coupling to the transport system. Is also involved in cystathionine, djenkolate, and S-methylcysteine transport. This Bacillus subtilis (strain 168) protein is L-cystine import ATP-binding protein TcyN (tcyN).